A 160-amino-acid polypeptide reads, in one-letter code: Small ribosomal subunit protein uS9 (160 aa).

The segment covering 1-18 (MTDTSNSLQDLGTLTGAP) has biased composition (polar residues). The interval 1–37 (MTDTSNSLQDLGTLTGAPSAQPVKSVEPKIDAQGRAY) is disordered.

Belongs to the universal ribosomal protein uS9 family.

This Hyphomonas neptunium (strain ATCC 15444) protein is Small ribosomal subunit protein uS9.